Reading from the N-terminus, the 271-residue chain is MLINFTKMHGLGNDFMVVDNLAGDITFNAKKITNLANRAFGIGFDQLLVVETSNIRGVDFRYVIYNSNGSEVEQCGNGARCFARFVNYKNLTHSNPITVKTRSNIISLHLNDDNTVCVDMGKPSFNPADIPLLVPQQSEYYQIEGFDLGAISIGNPHCVMLVKDVNTIDVNTIALKIQQSELLPNQANIGFMQILNTHEINLRVYERGSEETLACGSGACAAVAYGVEQGLLKKNVVVHLSGGDALIEYTQGGHIFLSGPAQFVFEGQVEI.

Substrate is bound by residues Asn13, Gln46, and Asn66. The active-site Proton donor is the Cys75. Substrate is bound by residues 76–77, Asn155, Asn188, and 206–207; these read GN and ER. Cys215 functions as the Proton acceptor in the catalytic mechanism. A substrate-binding site is contributed by 216–217; it reads GS.

It belongs to the diaminopimelate epimerase family. As to quaternary structure, homodimer.

It is found in the cytoplasm. It carries out the reaction (2S,6S)-2,6-diaminopimelate = meso-2,6-diaminopimelate. It functions in the pathway amino-acid biosynthesis; L-lysine biosynthesis via DAP pathway; DL-2,6-diaminopimelate from LL-2,6-diaminopimelate: step 1/1. Functionally, catalyzes the stereoinversion of LL-2,6-diaminopimelate (L,L-DAP) to meso-diaminopimelate (meso-DAP), a precursor of L-lysine and an essential component of the bacterial peptidoglycan. The sequence is that of Diaminopimelate epimerase from Vesicomyosocius okutanii subsp. Calyptogena okutanii (strain HA).